The sequence spans 233 residues: Tropomyosin (233 aa).

Residues 6-222 (FDTVNEKYQE…KERYKAISDE (217 aa)) adopt a coiled-coil conformation. Residues 48-88 (MERSEERLQTATEKLEEASKAADESERNRKVLENLNNASEE) are disordered. Residues 51–79 (SEERLQTATEKLEEASKAADESERNRKVL) show a composition bias toward basic and acidic residues.

Belongs to the tropomyosin family. Homodimer.

In terms of biological role, tropomyosin, in association with the troponin complex, plays a central role in the calcium dependent regulation of muscle contraction. This chain is Tropomyosin, found in Magallana gigas (Pacific oyster).